The following is a 319-amino-acid chain: tRNA-cytidine(32) 2-sulfurtransferase (319 aa).

A PP-loop motif motif is present at residues 43–48; sequence SGGKDS. Residues Cys118, Cys121, and Cys209 each contribute to the [4Fe-4S] cluster site. Residues 272–297 are disordered; it reads DLAFDSEKMPERFSDGSEEDESEIKI. The span at 276–286 shows a compositional bias: basic and acidic residues; sequence DSEKMPERFSD.

The protein belongs to the TtcA family. Homodimer. Mg(2+) serves as cofactor. It depends on [4Fe-4S] cluster as a cofactor.

The protein localises to the cytoplasm. The enzyme catalyses cytidine(32) in tRNA + S-sulfanyl-L-cysteinyl-[cysteine desulfurase] + AH2 + ATP = 2-thiocytidine(32) in tRNA + L-cysteinyl-[cysteine desulfurase] + A + AMP + diphosphate + H(+). It participates in tRNA modification. In terms of biological role, catalyzes the ATP-dependent 2-thiolation of cytidine in position 32 of tRNA, to form 2-thiocytidine (s(2)C32). The sulfur atoms are provided by the cysteine/cysteine desulfurase (IscS) system. The chain is tRNA-cytidine(32) 2-sulfurtransferase from Neisseria gonorrhoeae (strain ATCC 700825 / FA 1090).